The primary structure comprises 215 residues: HTH-type transcriptional repressor FabR (215 aa).

Residues 10–70 (KTRRSLVEAA…TMVDESGLML (61 aa)) enclose the HTH tetR-type domain. A DNA-binding region (H-T-H motif) is located at residues 33–52 (SLREVAREAVIAPTSFYRHF).

In terms of assembly, homodimer.

The protein resides in the cytoplasm. Represses the transcription of fabB, involved in unsaturated fatty acid (UFA) biosynthesis. By controlling UFA production, FabR directly influences the physical properties of the membrane bilayer. This chain is HTH-type transcriptional repressor FabR, found in Escherichia coli (strain K12 / MC4100 / BW2952).